A 706-amino-acid polypeptide reads, in one-letter code: Fatty acid oxidation complex subunit alpha (706 aa).

The enoyl-CoA hydratase stretch occupies residues 1–188 (MEKTFNLTRR…KMGLVNDVVP (188 aa)). The tract at residues 308–706 (RKVKKAVILG…TMAQENAHFF (399 aa)) is 3-hydroxyacyl-CoA dehydrogenase.

It in the N-terminal section; belongs to the enoyl-CoA hydratase/isomerase family. This sequence in the central section; belongs to the 3-hydroxyacyl-CoA dehydrogenase family. As to quaternary structure, heterotetramer of two alpha chains (FadJ) and two beta chains (FadI).

It localises to the cytoplasm. The catalysed reaction is a (3S)-3-hydroxyacyl-CoA = a (2E)-enoyl-CoA + H2O. It catalyses the reaction a 4-saturated-(3S)-3-hydroxyacyl-CoA = a (3E)-enoyl-CoA + H2O. The enzyme catalyses a (3S)-3-hydroxyacyl-CoA + NAD(+) = a 3-oxoacyl-CoA + NADH + H(+). It carries out the reaction (3S)-3-hydroxybutanoyl-CoA = (3R)-3-hydroxybutanoyl-CoA. It functions in the pathway lipid metabolism; fatty acid beta-oxidation. Its function is as follows. Catalyzes the formation of a hydroxyacyl-CoA by addition of water on enoyl-CoA. Also exhibits 3-hydroxyacyl-CoA epimerase and 3-hydroxyacyl-CoA dehydrogenase activities. The protein is Fatty acid oxidation complex subunit alpha of Shewanella baltica (strain OS155 / ATCC BAA-1091).